We begin with the raw amino-acid sequence, 387 residues long: 1-deoxy-D-xylulose 5-phosphate reductoisomerase (387 aa).

Residues Thr10, Gly11, Ile13, Asn38, and Asn122 each coordinate NADPH. Lys123 provides a ligand contact to 1-deoxy-D-xylulose 5-phosphate. Glu124 provides a ligand contact to NADPH. Asp148 contacts Mn(2+). 1-deoxy-D-xylulose 5-phosphate is bound by residues Ser149, Glu150, Ser174, and His197. Position 150 (Glu150) interacts with Mn(2+). Gly203 is an NADPH binding site. 1-deoxy-D-xylulose 5-phosphate-binding residues include Ser210, Asn215, Lys216, and Glu219. Residue Glu219 participates in Mn(2+) binding.

This sequence belongs to the DXR family. Requires Mg(2+) as cofactor. Mn(2+) is required as a cofactor.

It catalyses the reaction 2-C-methyl-D-erythritol 4-phosphate + NADP(+) = 1-deoxy-D-xylulose 5-phosphate + NADPH + H(+). Its pathway is isoprenoid biosynthesis; isopentenyl diphosphate biosynthesis via DXP pathway; isopentenyl diphosphate from 1-deoxy-D-xylulose 5-phosphate: step 1/6. Functionally, catalyzes the NADPH-dependent rearrangement and reduction of 1-deoxy-D-xylulose-5-phosphate (DXP) to 2-C-methyl-D-erythritol 4-phosphate (MEP). The protein is 1-deoxy-D-xylulose 5-phosphate reductoisomerase of Ehrlichia ruminantium (strain Welgevonden).